A 92-amino-acid polypeptide reads, in one-letter code: Large ribosomal subunit protein eL43 (92 aa).

The C4-type zinc-finger motif lies at 39–60 (CQFCGKDAMKRQAVGIWGCKSC).

It belongs to the eukaryotic ribosomal protein eL43 family.

The chain is Large ribosomal subunit protein eL43 (RPL37A) from Cryptochiton stelleri (Giant gumboot chiton).